Reading from the N-terminus, the 427-residue chain is Trigger factor (427 aa).

The PPIase FKBP-type domain occupies 163–248; sequence GDTVVIDFVG…IHEVKAKEVP (86 aa).

It belongs to the FKBP-type PPIase family. Tig subfamily.

Its subcellular location is the cytoplasm. The catalysed reaction is [protein]-peptidylproline (omega=180) = [protein]-peptidylproline (omega=0). In terms of biological role, involved in protein export. Acts as a chaperone by maintaining the newly synthesized protein in an open conformation. Functions as a peptidyl-prolyl cis-trans isomerase. This chain is Trigger factor, found in Streptococcus pneumoniae serotype 2 (strain D39 / NCTC 7466).